Consider the following 635-residue polypeptide: Threonine--tRNA ligase (635 aa).

In terms of domain architecture, TGS spans 1–61 (MVSIRLPDGS…DHDVALAIVT (61 aa)). The tract at residues 242-533 (DHRKLGKQLD…LIEHHAGAMP (292 aa)) is catalytic. Residues cysteine 333, histidine 384, and histidine 510 each contribute to the Zn(2+) site.

It belongs to the class-II aminoacyl-tRNA synthetase family. As to quaternary structure, homodimer. It depends on Zn(2+) as a cofactor.

Its subcellular location is the cytoplasm. The catalysed reaction is tRNA(Thr) + L-threonine + ATP = L-threonyl-tRNA(Thr) + AMP + diphosphate + H(+). Its function is as follows. Catalyzes the attachment of threonine to tRNA(Thr) in a two-step reaction: L-threonine is first activated by ATP to form Thr-AMP and then transferred to the acceptor end of tRNA(Thr). Also edits incorrectly charged L-seryl-tRNA(Thr). This is Threonine--tRNA ligase from Paraburkholderia phytofirmans (strain DSM 17436 / LMG 22146 / PsJN) (Burkholderia phytofirmans).